A 120-amino-acid polypeptide reads, in one-letter code: NAD(P)H-quinone oxidoreductase subunit 3, chloroplastic (120 aa).

3 consecutive transmembrane segments (helical) span residues Ile9 to Gly29, Met64 to Met84, and Val88 to Leu108.

It belongs to the complex I subunit 3 family. In terms of assembly, NDH is composed of at least 16 different subunits, 5 of which are encoded in the nucleus.

It is found in the plastid. Its subcellular location is the chloroplast thylakoid membrane. It catalyses the reaction a plastoquinone + NADH + (n+1) H(+)(in) = a plastoquinol + NAD(+) + n H(+)(out). The enzyme catalyses a plastoquinone + NADPH + (n+1) H(+)(in) = a plastoquinol + NADP(+) + n H(+)(out). NDH shuttles electrons from NAD(P)H:plastoquinone, via FMN and iron-sulfur (Fe-S) centers, to quinones in the photosynthetic chain and possibly in a chloroplast respiratory chain. The immediate electron acceptor for the enzyme in this species is believed to be plastoquinone. Couples the redox reaction to proton translocation, and thus conserves the redox energy in a proton gradient. In Aethionema cordifolium (Lebanon stonecress), this protein is NAD(P)H-quinone oxidoreductase subunit 3, chloroplastic.